We begin with the raw amino-acid sequence, 396 residues long: Large ribosomal subunit protein uL24m (396 aa).

The tract at residues 374–396 is disordered; sequence QLSLGGGQEDAATTTSPEQPKVV. A compositionally biased stretch (polar residues) spans 384–396; sequence AATTTSPEQPKVV.

Belongs to the universal ribosomal protein uL24 family. Component of the mitochondrial large ribosomal subunit (mt-LSU). Mature N.crassa 74S mitochondrial ribosomes consist of a small (37S) and a large (54S) subunit. The 37S small subunit contains a 16S ribosomal RNA (16S mt-rRNA) and 32 different proteins. The 54S large subunit contains a 23S rRNA (23S mt-rRNA) and 42 different proteins. uL24m forms the wall of the exit tunnel.

The protein localises to the mitochondrion. In terms of biological role, component of the mitochondrial ribosome (mitoribosome), a dedicated translation machinery responsible for the synthesis of mitochondrial genome-encoded proteins, including at least some of the essential transmembrane subunits of the mitochondrial respiratory chain. The mitoribosomes are attached to the mitochondrial inner membrane and translation products are cotranslationally integrated into the membrane. The chain is Large ribosomal subunit protein uL24m (mrpl40) from Neurospora crassa (strain ATCC 24698 / 74-OR23-1A / CBS 708.71 / DSM 1257 / FGSC 987).